The following is a 158-amino-acid chain: Probable deoxyuridine 5'-triphosphate nucleotidohydrolase (158 aa).

Belongs to the dUTPase family. The cofactor is Mg(2+).

The catalysed reaction is dUTP + H2O = dUMP + diphosphate + H(+). It functions in the pathway pyrimidine metabolism; dUMP biosynthesis; dUMP from dCTP (dUTP route): step 1/2. Functionally, this enzyme is involved in nucleotide metabolism: it produces dUMP, the immediate precursor of thymidine nucleotides and it decreases the intracellular concentration of dUTP so that uracil cannot be incorporated into DNA. It does probably not deaminate dCTP. In Sulfolobus islandicus rod-shaped virus 1 (SIRV-1), this protein is Probable deoxyuridine 5'-triphosphate nucleotidohydrolase.